We begin with the raw amino-acid sequence, 362 residues long: Methylthioribose-1-phosphate isomerase (362 aa).

Aspartate 252 functions as the Proton donor in the catalytic mechanism.

Belongs to the eIF-2B alpha/beta/delta subunits family. MtnA subfamily.

The protein localises to the cytoplasm. Its subcellular location is the nucleus. The enzyme catalyses 5-(methylsulfanyl)-alpha-D-ribose 1-phosphate = 5-(methylsulfanyl)-D-ribulose 1-phosphate. It participates in amino-acid biosynthesis; L-methionine biosynthesis via salvage pathway; L-methionine from S-methyl-5-thio-alpha-D-ribose 1-phosphate: step 1/6. Functionally, catalyzes the interconversion of methylthioribose-1-phosphate (MTR-1-P) into methylthioribulose-1-phosphate (MTRu-1-P). This Drosophila pseudoobscura pseudoobscura (Fruit fly) protein is Methylthioribose-1-phosphate isomerase.